The sequence spans 205 residues: Arginine exporter protein ArgO (205 aa).

6 helical membrane-spanning segments follow: residues 1-21, 42-62, 67-87, 111-131, 147-167, and 185-205; these read MLAVYLHGFILSAAMILPLGP, LCALSDIILICAGIFGGSALL, LLLALVTWGGVAFLMWYGWGA, ILVTLLAVTWLNPHVYLDTFV, WFALGAVTASIVWFFALAFLA, and LFVGGVMGFIAFQLARQGFGL.

It belongs to the LysE/ArgO transporter (TC 2.A.75) family.

It localises to the cell inner membrane. The enzyme catalyses L-arginine(in) = L-arginine(out). Functionally, involved in the export of arginine. Important to control the intracellular level of arginine and the correct balance between arginine and lysine. This chain is Arginine exporter protein ArgO, found in Yersinia pseudotuberculosis serotype O:3 (strain YPIII).